Consider the following 342-residue polypeptide: (Lyso)-N-acylphosphatidylethanolamine lipase (342 aa).

An AB hydrolase-1 domain is found at 70–201; it reads PLVMVHGFGG…KAVASVLGRS (132 aa).

Belongs to the peptidase S33 family. ABHD4/ABHD5 subfamily.

It carries out the reaction N-hexadecanoyl-1,2-di-(9Z-octadecenoyl)-sn-glycero-3-phosphoethanolamine + H2O = N-hexadecanoyl-1-(9Z-octadecenoyl)-sn-glycero-3-phosphoethanolamine + (9Z)-octadecenoate + H(+). The enzyme catalyses an N-acyl-1,2-diacyl-sn-glycero-3-phosphoethanolamine + H2O = N,1-diacyl-sn-glycero-3-phosphoethanolamine + a fatty acid + H(+). It catalyses the reaction N-hexadecanoyl-1-(9Z-octadecenoyl)-sn-glycero-3-phosphoethanolamine + H2O = N-hexadecanoyl-sn-glycero-3-phosphoethanolamine + (9Z)-octadecenoate + H(+). The catalysed reaction is N-octadecanoyl-1-(9Z-octadecenoyl)-sn-glycero-3-phosphoethanolamine + H2O = N-octadecanoyl-sn-glycero-3-phospho-ethanolamine + (9Z)-octadecenoate + H(+). It carries out the reaction N-eicosanoyl-1-(9Z-octadecenoyl)-sn-glycero-3-phosphoethanolamine + H2O = N-eicosanoyl-sn-glycero-3-phosphoethanolamine + (9Z)-octadecenoate + H(+). The enzyme catalyses N,1-di-(9Z-octadecenoyl)-sn-glycero-3-phosphoethanolamine + H2O = N-(9Z-octadecenoyl)-sn-glycero-3-phosphoethanolamine + (9Z)-octadecenoate + H(+). It catalyses the reaction N-(5Z,8Z,11Z,14Z-eicosatetraenoyl)-1-(9Z-octadecenoyl)-sn-glycero-3-phosphoethanolamine + H2O = N-(5Z,8Z,11Z,14Z-eicosatetraenoyl)-sn-glycero-3-phosphoethanolamine + (9Z)-octadecenoate + H(+). The catalysed reaction is 1-octadecanoyl-2-(9Z-octadecenoyl)-sn-glycero-3-phospho-(N-hexadecanoyl)-serine + H2O = 1-octadecanoyl-2-hydroxy-sn-glycero-3-phospho-(N-hexadecanoyl)-serine + (9Z)-octadecenoate + H(+). It carries out the reaction 1-O-(1Z-octadecenoyl)-2-(9Z-octadecenoyl)-sn-glycero-3-phospho-N-hexadecanoyl-ethanolamine + H2O = 1-O-(1Z-octadecenyl)-sn-glycero-3-phospho-N-hexadecanoyl-ethanolamine + (9Z)-octadecenoate + H(+). The enzyme catalyses N,1-diacyl-sn-glycero-3-phosphoethanolamine + H2O = N-acyl-sn-glycero-3-phosphoethanolamine + a fatty acid + H(+). Lysophospholipase selective for N-acyl phosphatidylethanolamine (NAPE). Contributes to the biosynthesis of N-acyl ethanolamines, including the endocannabinoid anandamide by hydrolyzing the sn-1 and sn-2 acyl chains from N-acyl phosphatidylethanolamine (NAPE) generating glycerophospho-N-acyl ethanolamine (GP-NAE), an intermediate for N-acyl ethanolamine biosynthesis. Hydrolyzes substrates bearing saturated, monounsaturated, polyunsaturated N-acyl chains. Shows no significant activity towards other lysophospholipids, including lysophosphatidylcholine, lysophosphatidylethanolamine and lysophosphatidylserine. In Homo sapiens (Human), this protein is (Lyso)-N-acylphosphatidylethanolamine lipase.